A 243-amino-acid polypeptide reads, in one-letter code: Flavin-dependent thymidylate synthase (243 aa).

The 206-residue stretch at Val2 to Lys207 folds into the ThyX domain. FAD is bound by residues Ser56, Arg80–Arg82, and Gln88. DUMP contacts are provided by residues Gln77–Arg80, Gln88–Arg92, and Arg146. Positions Arg80–Ser90 match the ThyX motif motif. Residues Asn162–Arg164 and His168 each bind FAD. Arg173 contributes to the dUMP binding site. The active-site Involved in ionization of N3 of dUMP, leading to its activation is Arg173.

It belongs to the thymidylate synthase ThyX family. As to quaternary structure, homotetramer. Requires FAD as cofactor.

The catalysed reaction is dUMP + (6R)-5,10-methylene-5,6,7,8-tetrahydrofolate + NADPH + H(+) = dTMP + (6S)-5,6,7,8-tetrahydrofolate + NADP(+). Its pathway is pyrimidine metabolism; dTTP biosynthesis. Functionally, catalyzes the reductive methylation of 2'-deoxyuridine-5'-monophosphate (dUMP) to 2'-deoxythymidine-5'-monophosphate (dTMP) while utilizing 5,10-methylenetetrahydrofolate (mTHF) as the methyl donor, and NADPH and FADH(2) as the reductant. The chain is Flavin-dependent thymidylate synthase from Pyrococcus horikoshii (strain ATCC 700860 / DSM 12428 / JCM 9974 / NBRC 100139 / OT-3).